The sequence spans 208 residues: Ribosomal RNA large subunit methyltransferase E (208 aa).

Positions 61, 63, 81, 97, and 122 each coordinate S-adenosyl-L-methionine. K162 acts as the Proton acceptor in catalysis.

It belongs to the class I-like SAM-binding methyltransferase superfamily. RNA methyltransferase RlmE family.

The protein resides in the cytoplasm. The catalysed reaction is uridine(2552) in 23S rRNA + S-adenosyl-L-methionine = 2'-O-methyluridine(2552) in 23S rRNA + S-adenosyl-L-homocysteine + H(+). Its function is as follows. Specifically methylates the uridine in position 2552 of 23S rRNA at the 2'-O position of the ribose in the fully assembled 50S ribosomal subunit. This chain is Ribosomal RNA large subunit methyltransferase E, found in Pseudomonas entomophila (strain L48).